The primary structure comprises 176 residues: MKFVSDLLSVILFFATYTVTKNMIAATAVALVAGVVQAAFLYWKYKKLDTMQWVGLVLIVVFGGATIVLGDSRFIMWKPSVLFWLGALFLWGSHLAGKNGLKASIGREIQLPDAVWAKLTYMWVGFLIFMGIANWFVFTRFESQWVNYKMFGSTALMLVFFIIQGIYLSTCLKKED.

5 helical membrane passes run 23-43 (MIAA…FLYW), 50-70 (TMQW…IVLG), 74-94 (FIMW…WGSH), 119-139 (LTYM…FVFT), and 150-170 (MFGS…YLST).

This sequence belongs to the YciB family.

The protein resides in the cell inner membrane. In terms of biological role, plays a role in cell envelope biogenesis, maintenance of cell envelope integrity and membrane homeostasis. The sequence is that of Inner membrane-spanning protein YciB from Neisseria meningitidis serogroup A / serotype 4A (strain DSM 15465 / Z2491).